The primary structure comprises 592 residues: Medium-chain-fatty-acid--[acyl-carrier-protein] ligase JamA (592 aa).

It belongs to the ATP-dependent AMP-binding enzyme family.

The catalysed reaction is a medium-chain fatty acid + holo-[ACP] + ATP = a medium-chain fatty acyl-[ACP] + AMP + diphosphate. It carries out the reaction a medium-chain fatty acid + ATP + H(+) = a medium-chain fatty acyl-AMP + diphosphate. It catalyses the reaction a medium-chain fatty acyl-AMP + holo-[ACP] = a medium-chain fatty acyl-[ACP] + AMP + H(+). Functionally, ligase involved in the biosynthesis of jamaicamides, which show sodium channel blocking activity and fish toxicity. Initiates jamaicamide biosynthesis by the activation of the starter unit, 5-hexenoic acid, followed by the loading of the activated 5-hexenoic acid onto the acyl carrier protein JamC. In vitro, can also use 5-hexynoic acid, heptanoic acid, butanoic acid, hexanoic acid and benzoic acid. This Moorena producens (strain JHB) protein is Medium-chain-fatty-acid--[acyl-carrier-protein] ligase JamA.